We begin with the raw amino-acid sequence, 313 residues long: HPr kinase/phosphorylase (313 aa).

Residues His140 and Lys161 contribute to the active site. An ATP-binding site is contributed by 155-162; sequence GNSGAGKS. Ser162 provides a ligand contact to Mg(2+). Asp179 functions as the Proton acceptor; for phosphorylation activity. Proton donor; for dephosphorylation activity in the catalytic mechanism. The tract at residues 203 to 212 is important for the catalytic mechanism of both phosphorylation and dephosphorylation; sequence IEVRGLGILN. Glu204 lines the Mg(2+) pocket. Arg246 is a catalytic residue. Residues 267 to 272 form an important for the catalytic mechanism of dephosphorylation region; that stretch reads PVAAGR.

Belongs to the HPrK/P family. In terms of assembly, homohexamer. The cofactor is Mg(2+).

The enzyme catalyses [HPr protein]-L-serine + ATP = [HPr protein]-O-phospho-L-serine + ADP + H(+). It catalyses the reaction [HPr protein]-O-phospho-L-serine + phosphate + H(+) = [HPr protein]-L-serine + diphosphate. Its function is as follows. Catalyzes the ATP- as well as the pyrophosphate-dependent phosphorylation of a specific serine residue in HPr, a phosphocarrier protein of the phosphoenolpyruvate-dependent sugar phosphotransferase system (PTS). HprK/P also catalyzes the pyrophosphate-producing, inorganic phosphate-dependent dephosphorylation (phosphorolysis) of seryl-phosphorylated HPr (P-Ser-HPr). The protein is HPr kinase/phosphorylase of Azoarcus sp. (strain BH72).